The sequence spans 237 residues: Ribonuclease 3 (237 aa).

One can recognise an RNase III domain in the interval 5–136 (VDELSARLGV…VIAALFLDQG (132 aa)). Residue Glu-49 coordinates Mg(2+). Asp-53 is a catalytic residue. Mg(2+) contacts are provided by Asp-122 and Glu-125. Glu-125 is a catalytic residue. One can recognise a DRBM domain in the interval 163–232 (DYKSRLQARI…ARAALDALEG (70 aa)). Positions 185–208 (IDRSGPEHRPEFTVEVRAGEERLG) are enriched in basic and acidic residues. Positions 185 to 237 (IDRSGPEHRPEFTVEVRAGEERLGTGKGPSKQAAEQAAARAALDALEGGTDGR) are disordered. The span at 216–231 (QAAEQAAARAALDALE) shows a compositional bias: low complexity.

Belongs to the ribonuclease III family. Homodimer. The cofactor is Mg(2+).

The protein resides in the cytoplasm. It carries out the reaction Endonucleolytic cleavage to 5'-phosphomonoester.. In terms of biological role, digests double-stranded RNA. Involved in the processing of primary rRNA transcript to yield the immediate precursors to the large and small rRNAs (23S and 16S). Processes some mRNAs, and tRNAs when they are encoded in the rRNA operon. Processes pre-crRNA and tracrRNA of type II CRISPR loci if present in the organism. This Roseiflexus sp. (strain RS-1) protein is Ribonuclease 3.